The primary structure comprises 239 residues: Probable transcriptional regulator ycf27 (239 aa).

Residues 7–120 (KILVVDDEIS…ELEARIRSLL (114 aa)) form the Response regulatory domain. A 4-aspartylphosphate modification is found at D56. The segment at residues 76–94 (DIPIIMLTALGDVADRITG) is a DNA-binding region (H-T-H motif). A DNA-binding region (ompR/PhoB-type) is located at residues 135-236 (GENLQIGFLK…ARGIGYLFQN (102 aa)).

It is found in the plastid. It localises to the cyanelle. In terms of biological role, probable promoter-specific protein mediating the interaction between DNA and RNA polymerase. This Cyanophora paradoxa protein is Probable transcriptional regulator ycf27 (ycf27).